A 129-amino-acid chain; its full sequence is Large ribosomal subunit protein bL12 (129 aa).

This sequence belongs to the bacterial ribosomal protein bL12 family. Homodimer. Part of the ribosomal stalk of the 50S ribosomal subunit. Forms a multimeric L10(L12)X complex, where L10 forms an elongated spine to which 2 to 4 L12 dimers bind in a sequential fashion. Binds GTP-bound translation factors.

Forms part of the ribosomal stalk which helps the ribosome interact with GTP-bound translation factors. Is thus essential for accurate translation. The chain is Large ribosomal subunit protein bL12 from Treponema pallidum (strain Nichols).